We begin with the raw amino-acid sequence, 323 residues long: E3 ubiquitin-protein ligase makorin (323 aa).

2 C3H1-type zinc fingers span residues 1-28 (MSDRILCKFFVHGSCLKGENCEFSHDSK) and 29-56 (DPPNNVCTFYQKRICLYGSRCRYDHVRA). The span at 62 to 74 (LSSDSESLDRSIS) shows a compositional bias: low complexity. The interval 62-92 (LSSDSESLDRSISTTPSRHLQQQGDNNDGDK) is disordered. The span at 75-87 (TTPSRHLQQQGDN) shows a compositional bias: polar residues. A C3H1-type 3 zinc finger spans residues 101–128 (PREYPICSFAAAGDCPRGNQCPHMHGDL). The tract at residues 129–158 (CNTCGKKCLHPFRPEEREEHTKECEKKQKH) is makorin-type Cys-His. An RING-type zinc finger spans residues 170–228 (CSVCLDRILSKATPGERKFGLLTECDHPFCIQCIRNWRSSAPVSGMDVNSTLRACPICR). The C3H1-type 4 zinc finger occupies 257-286 (KLRSIDCKHFNFGNGNCPFGASCFYKHAYS).

The enzyme catalyses S-ubiquitinyl-[E2 ubiquitin-conjugating enzyme]-L-cysteine + [acceptor protein]-L-lysine = [E2 ubiquitin-conjugating enzyme]-L-cysteine + N(6)-ubiquitinyl-[acceptor protein]-L-lysine.. It functions in the pathway protein modification; protein ubiquitination. Functionally, E3 ubiquitin ligase catalyzing the covalent attachment of ubiquitin moieties onto substrate proteins. This chain is E3 ubiquitin-protein ligase makorin (MKRN), found in Arabidopsis thaliana (Mouse-ear cress).